The chain runs to 346 residues: Methylthioribose-1-phosphate isomerase (346 aa).

Substrate contacts are provided by residues 44 to 46, arginine 87, and glutamine 194; that span reads RGA. The active-site Proton donor is the aspartate 235. 245-246 is a substrate binding site; that stretch reads NK.

This sequence belongs to the eIF-2B alpha/beta/delta subunits family. MtnA subfamily.

It carries out the reaction 5-(methylsulfanyl)-alpha-D-ribose 1-phosphate = 5-(methylsulfanyl)-D-ribulose 1-phosphate. It participates in amino-acid biosynthesis; L-methionine biosynthesis via salvage pathway; L-methionine from S-methyl-5-thio-alpha-D-ribose 1-phosphate: step 1/6. Functionally, catalyzes the interconversion of methylthioribose-1-phosphate (MTR-1-P) into methylthioribulose-1-phosphate (MTRu-1-P). This Desulforamulus reducens (strain ATCC BAA-1160 / DSM 100696 / MI-1) (Desulfotomaculum reducens) protein is Methylthioribose-1-phosphate isomerase.